Reading from the N-terminus, the 176-residue chain is Tubulin polymerization-promoting protein family member 3 (176 aa).

A2 is modified (N-acetylalanine).

Belongs to the TPPP family.

The protein resides in the cytoplasm. It is found in the cytoskeleton. Regulator of microtubule dynamic that has microtubule bundling activity. Required for embryo implantation; possibly by regulating beta-catenin. Also required for decidualization via regulation of beta-catenin. The protein is Tubulin polymerization-promoting protein family member 3 (TPPP3) of Bos taurus (Bovine).